The primary structure comprises 60 residues: Short neurotoxin 1 (60 aa).

4 cysteine pairs are disulfide-bonded: C3/C22, C17/C39, C41/C52, and C53/C58.

This sequence belongs to the three-finger toxin family. Short-chain subfamily. Type I alpha-neurotoxin sub-subfamily. Expressed by the venom gland.

Its subcellular location is the secreted. In terms of biological role, binds to muscle nicotinic acetylcholine receptor (nAChR) and inhibit acetylcholine from binding to the receptor, thereby impairing neuromuscular transmission. This Hydrophis cyanocinctus (Asian annulated sea snake) protein is Short neurotoxin 1.